The following is a 198-amino-acid chain: Thymidine kinase (198 aa).

Residues 9-16 and 85-88 each bind ATP; these read GTMNSGKS and DEAQ. Residue Glu-86 is the Proton acceptor of the active site. Cys-143, Cys-146, Cys-180, and His-183 together coordinate Zn(2+).

This sequence belongs to the thymidine kinase family. Homotetramer.

The protein localises to the cytoplasm. The catalysed reaction is thymidine + ATP = dTMP + ADP + H(+). This is Thymidine kinase from Streptococcus thermophilus (strain ATCC BAA-250 / LMG 18311).